The following is a 706-amino-acid chain: Fatty acid oxidation complex subunit alpha (706 aa).

Residues Met1–Pro188 are enoyl-CoA hydratase. A 3-hydroxyacyl-CoA dehydrogenase region spans residues Arg308–Phe706.

It in the N-terminal section; belongs to the enoyl-CoA hydratase/isomerase family. This sequence in the central section; belongs to the 3-hydroxyacyl-CoA dehydrogenase family. Heterotetramer of two alpha chains (FadJ) and two beta chains (FadI).

Its subcellular location is the cytoplasm. The enzyme catalyses a (3S)-3-hydroxyacyl-CoA = a (2E)-enoyl-CoA + H2O. It carries out the reaction a 4-saturated-(3S)-3-hydroxyacyl-CoA = a (3E)-enoyl-CoA + H2O. The catalysed reaction is a (3S)-3-hydroxyacyl-CoA + NAD(+) = a 3-oxoacyl-CoA + NADH + H(+). It catalyses the reaction (3S)-3-hydroxybutanoyl-CoA = (3R)-3-hydroxybutanoyl-CoA. Its pathway is lipid metabolism; fatty acid beta-oxidation. In terms of biological role, catalyzes the formation of a hydroxyacyl-CoA by addition of water on enoyl-CoA. Also exhibits 3-hydroxyacyl-CoA epimerase and 3-hydroxyacyl-CoA dehydrogenase activities. In Shewanella baltica (strain OS185), this protein is Fatty acid oxidation complex subunit alpha.